We begin with the raw amino-acid sequence, 569 residues long: Urease subunit beta (569 aa).

A Urease domain is found at 131–569; sequence GGIDTHIHFI…VSLAQLFSIF (439 aa). H136, H138, and K219 together coordinate Ni(2+). N6-carboxylysine is present on K219. H221 contributes to the substrate binding site. Residues H248 and H274 each contribute to the Ni(2+) site. H322 acts as the Proton donor in catalysis. D362 is a Ni(2+) binding site.

Belongs to the metallo-dependent hydrolases superfamily. Urease alpha subunit family. As to quaternary structure, heterohexamer of 3 UreA (alpha) and 3 UreB (beta) subunits. Four heterohexamers assemble to form a 16 nm dodecameric complex. It depends on Ni cation as a cofactor. Post-translationally, carboxylation allows a single lysine to coordinate two nickel ions.

Its subcellular location is the cytoplasm. The enzyme catalyses urea + 2 H2O + H(+) = hydrogencarbonate + 2 NH4(+). It functions in the pathway nitrogen metabolism; urea degradation; CO(2) and NH(3) from urea (urease route): step 1/1. Its function is as follows. Ammonia produced by ureolysis increases the gastric pH thereby providing an environment permissive for colonization of the stomach. This Helicobacter pylori (strain J99 / ATCC 700824) (Campylobacter pylori J99) protein is Urease subunit beta.